A 91-amino-acid polypeptide reads, in one-letter code: Acyl-CoA-binding domain-containing protein 2 (91 aa).

The 86-residue stretch at 3–88 (LQEEFEEFAE…VKQLLEEASA (86 aa)) folds into the ACB domain. Residues lysine 15, 30–34 (YGLYK), lysine 52, lysine 56, and tyrosine 75 contribute to the an acyl-CoA site.

This sequence belongs to the ACBP family. Highly expressed in leaves. Expressed at low levels in roots and seeds.

It localises to the cytoplasm. Its subcellular location is the cytosol. Binds medium- and long-chain acyl-CoA esters with high affinity. Can interact in vitro with linolenoyl-CoA. Binds palmitoyl-CoA and linoleoyl-CoA in vitro. Binds phosphatidic acid (PA) and phosphatidylcholine (PC) in vitro. May play a role in the biosynthesis of phospholipids. This is Acyl-CoA-binding domain-containing protein 2 from Oryza sativa subsp. japonica (Rice).